The chain runs to 338 residues: Aspartate-semialdehyde dehydrogenase (338 aa).

NADP(+) contacts are provided by residues 13 to 16 and 41 to 42; these read TGAV and RS. Arg101 contributes to the phosphate binding site. The active-site Acyl-thioester intermediate is the Cys130. Gln157 is a substrate binding site. An NADP(+)-binding site is contributed by 160 to 161; that stretch reads SG. Position 214 (Lys214) interacts with phosphate. Substrate is bound at residue Arg236. His243 acts as the Proton acceptor in catalysis. Position 316 (Gln316) interacts with NADP(+).

Belongs to the aspartate-semialdehyde dehydrogenase family. In terms of assembly, homodimer.

The catalysed reaction is L-aspartate 4-semialdehyde + phosphate + NADP(+) = 4-phospho-L-aspartate + NADPH + H(+). It participates in amino-acid biosynthesis; L-lysine biosynthesis via DAP pathway; (S)-tetrahydrodipicolinate from L-aspartate: step 2/4. The protein operates within amino-acid biosynthesis; L-methionine biosynthesis via de novo pathway; L-homoserine from L-aspartate: step 2/3. Its pathway is amino-acid biosynthesis; L-threonine biosynthesis; L-threonine from L-aspartate: step 2/5. Catalyzes the NADPH-dependent formation of L-aspartate-semialdehyde (L-ASA) by the reductive dephosphorylation of L-aspartyl-4-phosphate. This is Aspartate-semialdehyde dehydrogenase (asd) from Synechocystis sp. (strain ATCC 27184 / PCC 6803 / Kazusa).